The sequence spans 171 residues: Translationally-controlled tumor protein homolog (171 aa).

The region spanning 1–171 (MIIYKDIITG…FKDGLEIEKC (171 aa)) is the TCTP domain.

Belongs to the TCTP family.

The protein resides in the cytoplasm. Functionally, involved in calcium binding and microtubule stabilization. The sequence is that of Translationally-controlled tumor protein homolog (tpt1) from Danio rerio (Zebrafish).